The following is a 76-amino-acid chain: Dermaseptin-B4 (76 aa).

A signal peptide spans 1–22 (MAFLKKSLFLVLFLGLVSLSIC). The propeptide occupies 23–43 (EEEKRENKDEIEQEDDEQSEE). Residue Gln-73 is modified to Glutamine amide. The propeptide occupies 75 to 76 (EQ).

The protein belongs to the frog skin active peptide (FSAP) family. Dermaseptin subfamily. In terms of tissue distribution, expressed by the skin glands.

It is found in the secreted. In terms of biological role, potent antimicrobial peptide with potent activity against Gram-positive and Gram-negative bacteria. Probably acts by disturbing membrane functions with its amphipathic structure. Has an activity of stimulation of insulin release, which may protect the species from being eaten by predators by causing fatal hypoglycemia. Has hemolytic activity. This Phyllomedusa bicolor (Two-colored leaf frog) protein is Dermaseptin-B4.